Reading from the N-terminus, the 416-residue chain is Leu/Ile/Val-binding protein homolog 4 (416 aa).

The N-terminal stretch at methionine 1–alanine 26 is a signal peptide.

It belongs to the leucine-binding protein family.

In terms of biological role, component of an amino-acid transport system. The chain is Leu/Ile/Val-binding protein homolog 4 from Brucella melitensis biotype 1 (strain ATCC 23456 / CCUG 17765 / NCTC 10094 / 16M).